A 187-amino-acid chain; its full sequence is Ras-like protein rasD (187 aa).

10 to 17 (GGGGVGKS) serves as a coordination point for GTP. Positions 32–40 (YDPTIEDSY) match the Effector region motif. GTP contacts are provided by residues 57-61 (DTAGQ) and 116-119 (NKAD). C184 is modified (cysteine methyl ester). A lipid anchor (S-geranylgeranyl cysteine) is attached at C184. Positions 185–187 (LIL) are cleaved as a propeptide — removed in mature form.

It belongs to the small GTPase superfamily. Ras family.

Its subcellular location is the cell membrane. It carries out the reaction GTP + H2O = GDP + phosphate + H(+). Alternates between an inactive form bound to GDP and an active form bound to GTP. Activated by a guanine nucleotide-exchange factor (GEF) and inactivated by a GTPase-activating protein (GAP). Functionally, ras proteins bind GDP/GTP and possess intrinsic GTPase activity. The sequence is that of Ras-like protein rasD (rasD) from Dictyostelium discoideum (Social amoeba).